The chain runs to 1154 residues: Coiled-coil domain-containing protein 136 (1154 aa).

The disordered stretch occupies residues 1 to 48; the sequence is MQAMEGEVLLPALYEEEEEEEEEEEEVEEEEEQVQKGGSVGSLSVNKH. Residues 14–32 show a composition bias toward acidic residues; sequence YEEEEEEEEEEEEVEEEEE. Residue S52 is modified to Phosphoserine. 2 coiled-coil regions span residues 696–733 and 859–974; these read QAKQELLQQEQGRLLEERKRLQADLQLCLEEMQLLQVQ and KLQA…RPSV. The segment covering 1031-1058 has biased composition (basic and acidic residues); it reads DGLAKEEEKKEEMEEEKKQVKEEAKEQC. Positions 1031–1131 are disordered; it reads DGLAKEEEKK…SSPTPNPPIF (101 aa). Over residues 1077–1109 the composition is skewed to acidic residues; the sequence is DQEENEEDKEEEEKEEDSEEEEDDADSSLESPE. The chain crosses the membrane as a helical span at residues 1130–1150; that stretch reads IFSLPLVGLVVISALLWCWWA.

In terms of tissue distribution, expressed in gastric tissues. Down-regulated in gastric cancer.

It localises to the cytoplasmic vesicle. The protein localises to the secretory vesicle. The protein resides in the acrosome membrane. May play a role in acrosome formation in spermatogenesis and in fertilization. This is Coiled-coil domain-containing protein 136 (CCDC136) from Homo sapiens (Human).